The chain runs to 565 residues: Ubiquitin carboxyl-terminal hydrolase 39 (565 aa).

Composition is skewed to basic and acidic residues over residues 1–21 and 28–39; these read MSGR…ESES and VKRERDREREPE. 2 disordered regions span residues 1–61 and 75–96; these read MSGR…SARE and EREV…GRVD. Residue Ser46 is modified to Phosphoserine. Lys51 is covalently cross-linked (Glycyl lysine isopeptide (Lys-Gly) (interchain with G-Cter in SUMO2)). A Phosphoserine modification is found at Ser82. Residues 85–96 show a composition bias toward basic and acidic residues; it reads EREVRAKNGRVD. A UBP-type; degenerate zinc finger spans residues 103–200; that stretch reads RHCPYLDTIN…YVLKPTFTKQ (98 aa). The Zn(2+) site is built by Cys136, Cys139, His155, and His161. Residues 225–555 enclose the USP domain; that stretch reads VGLNNIKAND…EAYIQIWKRR (331 aa).

It belongs to the peptidase C19 family. The U4/U6-U5 tri-snRNP complex is a building block of the precatalytic spliceosome (spliceosome B complex). Component of the U4/U6-U5 tri-snRNP complex composed of the U4, U6 and U5 snRNAs and at least PRPF3, PRPF4, PRPF6, PRPF8, PRPF31, SNRNP200, TXNL4A, SNRNP40, SNRPB, SNRPD1, SNRPD2, SNRPD3, SNRPE, SNRPF, SNRPG, DDX23, CD2BP2, PPIH, SNU13, EFTUD2, SART1 and USP39, plus LSM2, LSM3, LSM4, LSM5, LSM6, LSM7 and LSM8.

It localises to the nucleus. It catalyses the reaction Thiol-dependent hydrolysis of ester, thioester, amide, peptide and isopeptide bonds formed by the C-terminal Gly of ubiquitin (a 76-residue protein attached to proteins as an intracellular targeting signal).. Deubiquitinating enzyme that plays a role in many cellular processes including cellular antiviral response, epithelial morphogenesis, DNA repair or B-cell development. Plays a role in pre-mRNA splicing as a component of the U4/U6-U5 tri-snRNP, one of the building blocks of the precatalytic spliceosome. Specifically regulates immunoglobulin gene rearrangement in a spliceosome-dependent manner, which involves modulating chromatin interactions at the Igh locus and therefore plays an essential role in B-cell development. Regulates AURKB mRNA levels, and thereby plays a role in cytokinesis and in the spindle checkpoint. Regulates apoptosis and G2/M cell cycle checkpoint in response to DNA damage by deubiquitinating and stabilizing CHK2. Also plays an important role in DNA repair by controlling the recruitment of XRCC4/LIG4 to DNA double-strand breaks for non-homologous end-joining repair. Participates in antiviral activity by affecting the type I IFN signaling by stabilizing STAT1 and decreasing its 'Lys-6'-linked ubiquitination. Contributes to non-canonical Wnt signaling during epidermal differentiation. Acts as a negative regulator NF-kappa-B activation through deubiquitination of 'Lys-48'-linked ubiquitination of NFKBIA. The sequence is that of Ubiquitin carboxyl-terminal hydrolase 39 (USP39) from Pongo abelii (Sumatran orangutan).